Here is a 757-residue protein sequence, read N- to C-terminus: RNA cytosine C(5)-methyltransferase NSUN2 (757 aa).

Residues 1–35 (MGRRARGRRFQQPPQPEGEEDASDGGRKRGQAGWE) are disordered. S23 carries the post-translational modification Phosphoserine. K46 participates in a covalent cross-link: Glycyl lysine isopeptide (Lys-Gly) (interchain with G-Cter in SUMO2). Position 139 is a phosphoserine; by AURKB (S139). Residues 184-190 (CAAPGSK), D215, D242, and D268 each bind S-adenosyl-L-methionine. The active-site Nucleophile is the C321. The segment at 436 to 504 (NKRQPKVQNK…EKKDGVCGPP (69 aa)) is disordered. A phosphoserine mark is found at S456 and S473. Residues 463–476 (GNPSDQSELESQMI) show a composition bias toward polar residues. Glycyl lysine isopeptide (Lys-Gly) (interchain with G-Cter in SUMO2) cross-links involve residues K510 and K515. K585 carries the post-translational modification N6-acetyllysine; alternate. Residue K585 is modified to N6-malonyllysine; alternate. Residue K585 forms a Glycyl lysine isopeptide (Lys-Gly) (interchain with G-Cter in SUMO2); alternate linkage. Residue S592 is modified to Phosphoserine. Residues K639, K653, and K659 each participate in a glycyl lysine isopeptide (Lys-Gly) (interchain with G-Cter in SUMO2) cross-link. A disordered region spans residues 716 to 757 (LTNENAASPEQPGDEDAKQTAQDPCVPDSVPGCDAAAAEPSR). Residue T717 is modified to Phosphothreonine. S723 is subject to Phosphoserine.

This sequence belongs to the class I-like SAM-binding methyltransferase superfamily. RsmB/NOP family. TRM4 subfamily. In terms of assembly, interacts with NPM1 and NCL during interphase; interaction is disrupted following phosphorylation at Ser-139. In terms of processing, phosphorylated at Ser-139 by AURKB during mitosis, leading to abolish methyltransferase activity and the interaction with NPM1. Ubiquitously expressed at low level. Up-regulated in tumors. Dynamically expressed during morphogenesis and in adult skin: in adult skin, expression is up-regulated in the bulge and hair germ as soon as the hair follicle enters its growing phase (anagen). During anagen, expressed at highest level in cells of the hair germ that give rise to the hair matrix.

It localises to the nucleus. The protein localises to the nucleolus. It is found in the cytoplasm. Its subcellular location is the mitochondrion. The protein resides in the cytoskeleton. It localises to the spindle. The protein localises to the secreted. It is found in the extracellular exosome. It catalyses the reaction cytidine(48) in tRNA + S-adenosyl-L-methionine = 5-methylcytidine(48) in tRNA + S-adenosyl-L-homocysteine + H(+). The enzyme catalyses cytidine(49) in tRNA + S-adenosyl-L-methionine = 5-methylcytidine(49) in tRNA + S-adenosyl-L-homocysteine + H(+). It carries out the reaction cytidine(50) in tRNA + S-adenosyl-L-methionine = 5-methylcytidine(50) in tRNA + S-adenosyl-L-homocysteine + H(+). The catalysed reaction is cytidine(34) in tRNA precursor + S-adenosyl-L-methionine = 5-methylcytidine(34) in tRNA precursor + S-adenosyl-L-homocysteine + H(+). It catalyses the reaction a cytidine in mRNA + S-adenosyl-L-methionine = a 5-methylcytidine in mRNA + S-adenosyl-L-homocysteine + H(+). With respect to regulation, inhibited by magnesium ions. Its function is as follows. RNA cytosine C(5)-methyltransferase that methylates cytosine to 5-methylcytosine (m5C) in various RNAs, such as tRNAs, mRNAs and some long non-coding RNAs (lncRNAs). Involved in various processes, such as epidermal stem cell differentiation, testis differentiation and maternal to zygotic transition during early development: acts by increasing protein synthesis; cytosine C(5)-methylation promoting tRNA stability and preventing mRNA decay. Methylates cytosine to 5-methylcytosine (m5C) at positions 34 and 48 of intron-containing tRNA(Leu)(CAA) precursors, and at positions 48, 49 and 50 of tRNA(Gly)(GCC) precursors. tRNA methylation is required generation of RNA fragments derived from tRNAs (tRFs). Also mediates C(5)-methylation of mitochondrial tRNAs. Catalyzes cytosine C(5)-methylation of mRNAs, leading to stabilize them and prevent mRNA decay: mRNA stabilization involves YBX1 that specifically recognizes and binds m5C-modified transcripts. Cytosine C(5)-methylation of mRNAs also regulates mRNA export: methylated transcripts are specifically recognized by THOC4/ALYREF, which mediates mRNA nucleo-cytoplasmic shuttling. Also mediates cytosine C(5)-methylation of non-coding RNAs, such as vault RNAs (vtRNAs), promoting their processing into regulatory small RNAs. Cytosine C(5)-methylation of vtRNA VTRNA1.1 promotes its processing into small-vault RNA4 (svRNA4) and regulates epidermal differentiation. May act downstream of Myc to regulate epidermal cell growth and proliferation. Required for proper spindle assembly and chromosome segregation, independently of its methyltransferase activity. The polypeptide is RNA cytosine C(5)-methyltransferase NSUN2 (Mus musculus (Mouse)).